We begin with the raw amino-acid sequence, 160 residues long: Cytochrome b6-f complex subunit 4 (160 aa).

3 helical membrane passes run 36-56, 95-115, and 131-151; these read LLYI…GLAV, LLGV…PFLE, and TVFL…TLPI.

Belongs to the cytochrome b family. PetD subfamily. In terms of assembly, the 4 large subunits of the cytochrome b6-f complex are cytochrome b6, subunit IV (17 kDa polypeptide, petD), cytochrome f and the Rieske protein, while the 4 small subunits are petG, petL, petM and petN. The complex functions as a dimer.

The protein localises to the plastid. It localises to the chloroplast thylakoid membrane. In terms of biological role, component of the cytochrome b6-f complex, which mediates electron transfer between photosystem II (PSII) and photosystem I (PSI), cyclic electron flow around PSI, and state transitions. In Amborella trichopoda, this protein is Cytochrome b6-f complex subunit 4.